The primary structure comprises 267 residues: Putative ABC transporter permease protein MJ0413 (267 aa).

A run of 7 helical transmembrane segments spans residues 18–38, 48–68, 78–98, 115–135, 136–156, 188–208, and 228–248; these read VLKI…AIYI, EAVI…GSLI, VISG…LMGY, PIPP…GEMS, MIFI…ISGV, PSIL…VVAA, and LSRM…GLVL. The region spanning 71 to 252 is the ABC transmembrane type-1 domain; that stretch reads TIISIKRVIS…LIGLVLDRGL (182 aa).

Belongs to the binding-protein-dependent transport system permease family. CysTW subfamily.

Its subcellular location is the cell membrane. Probably part of a binding-protein-dependent transport system. Probably responsible for the translocation of the substrate across the membrane. The polypeptide is Putative ABC transporter permease protein MJ0413 (Methanocaldococcus jannaschii (strain ATCC 43067 / DSM 2661 / JAL-1 / JCM 10045 / NBRC 100440) (Methanococcus jannaschii)).